Here is a 156-residue protein sequence, read N- to C-terminus: uncharacterized protein (156 aa).

3 helical membrane passes run 21–41 (GVLF…AISL), 54–74 (TICS…IDFA), and 80–100 (SVLV…WALF).

Its subcellular location is the membrane. This is an uncharacterized protein from Saccharomyces cerevisiae (strain ATCC 204508 / S288c) (Baker's yeast).